The sequence spans 37 residues: Large ribosomal subunit protein bL36 (37 aa).

It belongs to the bacterial ribosomal protein bL36 family.

The chain is Large ribosomal subunit protein bL36 from Colwellia psychrerythraea (strain 34H / ATCC BAA-681) (Vibrio psychroerythus).